The chain runs to 137 residues: Protein shisa-5 (137 aa).

Residues 3–23 traverse the membrane as a helical segment; it reads FGATLAVGLTIFVLSVVTIII.

This sequence belongs to the shisa family. In terms of assembly, interacts with PDCD6; PDCD6 can stabilize SHISA5.

It is found in the endoplasmic reticulum membrane. It localises to the nucleus membrane. In terms of biological role, can induce apoptosis in a caspase-dependent manner and plays a role in p53/TP53-dependent apoptosis. This chain is Protein shisa-5 (SHISA5), found in Pongo abelii (Sumatran orangutan).